A 234-amino-acid polypeptide reads, in one-letter code: Peptidase E (234 aa).

Active-site charge relay system residues include Ser-123, Asp-138, and His-160.

Belongs to the peptidase S51 family.

The protein resides in the cytoplasm. The catalysed reaction is Dipeptidase E catalyzes the hydrolysis of dipeptides Asp-|-Xaa. It does not act on peptides with N-terminal Glu, Asn or Gln, nor does it cleave isoaspartyl peptides.. Functionally, hydrolyzes dipeptides containing N-terminal aspartate residues. May play a role in allowing the cell to use peptide aspartate to spare carbon otherwise required for the synthesis of the aspartate family of amino acids. In Actinobacillus pleuropneumoniae serotype 3 (strain JL03), this protein is Peptidase E.